Here is a 414-residue protein sequence, read N- to C-terminus: Gamma-glutamyl phosphate reductase (414 aa).

This sequence belongs to the gamma-glutamyl phosphate reductase family.

It localises to the cytoplasm. The enzyme catalyses L-glutamate 5-semialdehyde + phosphate + NADP(+) = L-glutamyl 5-phosphate + NADPH + H(+). The protein operates within amino-acid biosynthesis; L-proline biosynthesis; L-glutamate 5-semialdehyde from L-glutamate: step 2/2. Functionally, catalyzes the NADPH-dependent reduction of L-glutamate 5-phosphate into L-glutamate 5-semialdehyde and phosphate. The product spontaneously undergoes cyclization to form 1-pyrroline-5-carboxylate. The sequence is that of Gamma-glutamyl phosphate reductase from Xanthomonas oryzae pv. oryzae (strain MAFF 311018).